Reading from the N-terminus, the 250-residue chain is Acetylglutamate kinase (250 aa).

Residues Gly-41 to Gly-42, Arg-63, and Asn-156 contribute to the substrate site.

It belongs to the acetylglutamate kinase family. ArgB subfamily.

It is found in the cytoplasm. It carries out the reaction N-acetyl-L-glutamate + ATP = N-acetyl-L-glutamyl 5-phosphate + ADP. The protein operates within amino-acid biosynthesis; L-arginine biosynthesis; N(2)-acetyl-L-ornithine from L-glutamate: step 2/4. Catalyzes the ATP-dependent phosphorylation of N-acetyl-L-glutamate. This chain is Acetylglutamate kinase, found in Listeria welshimeri serovar 6b (strain ATCC 35897 / DSM 20650 / CCUG 15529 / CIP 8149 / NCTC 11857 / SLCC 5334 / V8).